The following is a 188-amino-acid chain: PRA1 family protein 3 (188 aa).

Met1 bears the N-acetylmethionine mark. Topologically, residues 1-35 (MDVNIAPLRAWDDFFPGSDRFARPDFRDISKWNNR) are cytoplasmic. 2 consecutive transmembrane segments (helical) span residues 36 to 56 (VVSN…MMIS) and 57 to 77 (VVGF…VLVF). The Cytoplasmic segment spans residues 78 to 93 (TGFVWAAHNKDILRRL). A run of 2 helical transmembrane segments spans residues 94–114 (KKQY…FLIS) and 115–135 (MFGG…LMFI). The tract at residues 103–117 (MVVMLASYFLISMFG) is required for homodimer formation and heterodimer formation with ARL6IP1. The Cytoplasmic portion of the chain corresponds to 136-188 (HASLRLRNLKNKLENKIEGIGLKRTPMGIVLDALEQQEENISKFADYISKVNE). Positions 136–188 (HASLRLRNLKNKLENKIEGIGLKRTPMGIVLDALEQQEENISKFADYISKVNE) are targeting to endoplasmic reticulum membrane.

It belongs to the PRA1 family. Homodimer. Heterodimer with ARL6IP1. Forms multimers. Interacts with ARL6. Interacts with prenylated RAB1A and RAB3A. Interacts with SLC1A1/EAAC1. Interacts with RTN2 (via first transmembrane domain). Does not interact with VAMP1, VAMP2 or VAMP3.

The protein resides in the endoplasmic reticulum membrane. The protein localises to the cell membrane. It localises to the cytoplasm. Its subcellular location is the cytoskeleton. In terms of biological role, regulates intracellular concentrations of taurine and glutamate. Negatively modulates SLC1A1/EAAC1 glutamate transport activity by decreasing its affinity for glutamate in a PKC activity-dependent manner. Plays a role in the retention of SLC1A1/EAAC1 in the endoplasmic reticulum. The sequence is that of PRA1 family protein 3 (ARL6IP5) from Sus scrofa (Pig).